We begin with the raw amino-acid sequence, 505 residues long: 2-isopropylmalate synthase (505 aa).

Residues 5 to 269 (IKIFDTTLRD…ETGIHTEYLY (265 aa)) form the Pyruvate carboxyltransferase domain. 4 residues coordinate Mn(2+): aspartate 14, histidine 204, histidine 206, and asparagine 240. Residues 393 to 505 (SLLYFHTFTG…AVNRFELRKR (113 aa)) are regulatory domain.

This sequence belongs to the alpha-IPM synthase/homocitrate synthase family. LeuA type 1 subfamily. As to quaternary structure, homodimer. Mn(2+) serves as cofactor.

The protein localises to the cytoplasm. It carries out the reaction 3-methyl-2-oxobutanoate + acetyl-CoA + H2O = (2S)-2-isopropylmalate + CoA + H(+). It functions in the pathway amino-acid biosynthesis; L-leucine biosynthesis; L-leucine from 3-methyl-2-oxobutanoate: step 1/4. In terms of biological role, catalyzes the condensation of the acetyl group of acetyl-CoA with 3-methyl-2-oxobutanoate (2-ketoisovalerate) to form 3-carboxy-3-hydroxy-4-methylpentanoate (2-isopropylmalate). The polypeptide is 2-isopropylmalate synthase (Sediminispirochaeta smaragdinae (strain DSM 11293 / JCM 15392 / SEBR 4228) (Spirochaeta smaragdinae)).